A 327-amino-acid polypeptide reads, in one-letter code: Polyprenyl transferase andD (327 aa).

Helical transmembrane passes span 49-69 (LGYI…ASIA), 81-101 (ITLL…WDDI), 140-160 (FAFV…MLFF), 174-194 (PQLI…GLNL), 201-221 (IPMA…DIIY), 244-264 (CLDA…VIAG), 271-291 (APFF…LAMA), and 307-327 (CCTS…VWRS).

It belongs to the UbiA prenyltransferase family. Mg(2+) is required as a cofactor.

It is found in the membrane. It functions in the pathway secondary metabolite biosynthesis; terpenoid biosynthesis. In terms of biological role, polyprenyl transferase; part of the gene cluster that mediates the biosynthesis of anditomin, a fungal meroterpenoid. The first step of the pathway is the synthesis of 3,5-dimethylorsellinic acid (DMOA) by the polyketide synthase andM. DMOA is then converted to the phthalide compound 5,7-dihydroxy-4,6-dimethylphthalide (DHDMP) by the cytochrome P450 monooxygenase andK, which is further prenylated by the prenyltransferase andD to yield farnesyl-DHDMP. Further epoxidation by the FAD-dependent monooxygenase andE leads to epoxyfarnesyl-DHDMP. The next step involves the terpene cyclase andB that converts epoxyfarnesyl-DHDMP into preandiloid A through opening of the epoxide ring followed by the cyclization of the farnesyl moiety. Preandiloid A is in turn oxidized at the C-3 hydroxyl group to yield preandiloid B by the dehydrogenase andC. The dioxygenase andA is solely responsible for the dehydrogenation of preandiloid B leading to the enone preandiloid C, as well as for the intriguing structural rearrangement to generate the bicyclo[2.2.2]octane core, transforming preandiloid C into andiconin. FAD-binding monooxygenase andJ then produces andilesin D which is reduced by dehydrogenase andI to yield andilesin A. Action of acetyltransferase andG followed by a spontaneous acetate elimination leads then to andilesin B, which is in turn substrate of the short chain dehydrogenase andH to yield andilesin C. Finally, the dioxygenase andF catalyzes the transformation of andilesin C to anditomin. The polypeptide is Polyprenyl transferase andD (Emericella variicolor (Aspergillus stellatus)).